The chain runs to 129 residues: MIEVQNVKLGTLISVFFFGMIGGTLRYLLSLKLASTGTILVNLIGSFCLAFLTYYVIERQKLPAWLSTGLGTGMVGAFTTFSTFTVDILGLSTFTDATFYLLISVVGGFLLAYTGMILGIKLGKVGDRR.

Transmembrane regions (helical) follow at residues 9–29 (LGTLISVFFFGMIGGTLRYLL), 37–57 (GTILVNLIGSFCLAFLTYYVI), 74–94 (MVGAFTTFSTFTVDILGLSTF), and 100–120 (YLLISVVGGFLLAYTGMILGI). Na(+)-binding residues include Gly76 and Thr79.

It belongs to the fluoride channel Fluc/FEX (TC 1.A.43) family.

It is found in the cell membrane. The enzyme catalyses fluoride(in) = fluoride(out). Its activity is regulated as follows. Na(+) is not transported, but it plays an essential structural role and its presence is essential for fluoride channel function. Its function is as follows. Fluoride-specific ion channel. Important for reducing fluoride concentration in the cell, thus reducing its toxicity. The protein is Fluoride-specific ion channel FluC 2 of Ligilactobacillus salivarius (strain UCC118) (Lactobacillus salivarius).